A 107-amino-acid chain; its full sequence is uncharacterized protein (107 aa).

The interval 23–64 (SASSSSSTRIPSGFASATSSKSNSSTKSSPSPINSFNNKTNN) is disordered. Residues 37 to 57 (ASATSSKSNSSTKSSPSPINS) are compositionally biased toward low complexity. The helical transmembrane segment at 76-98 (LAFGIVEFMVFNGMISTITTTTF) threads the bilayer.

It is found in the membrane. This is an uncharacterized protein from Dictyostelium discoideum (Social amoeba).